We begin with the raw amino-acid sequence, 702 residues long: Polyribonucleotide nucleotidyltransferase (702 aa).

Mg(2+)-binding residues include Asp-485 and Asp-491. The 61-residue stretch at 552 to 612 (PRTEIICIDP…EGVKKAISII (61 aa)) folds into the KH domain. One can recognise an S1 motif domain in the interval 622–690 (GEIYLGKVTK…NQGRINLSRK (69 aa)).

This sequence belongs to the polyribonucleotide nucleotidyltransferase family. Requires Mg(2+) as cofactor.

It is found in the cytoplasm. The enzyme catalyses RNA(n+1) + phosphate = RNA(n) + a ribonucleoside 5'-diphosphate. Its function is as follows. Involved in mRNA degradation. Catalyzes the phosphorolysis of single-stranded polyribonucleotides processively in the 3'- to 5'-direction. The polypeptide is Polyribonucleotide nucleotidyltransferase (Clostridium botulinum (strain ATCC 19397 / Type A)).